A 340-amino-acid chain; its full sequence is Anthranilate phosphoribosyltransferase (340 aa).

Residues Gly81, 84-85, Thr89, 91-94, 109-117, and Ala121 each bind 5-phospho-alpha-D-ribose 1-diphosphate; these read GD, NIST, and KHGNRNLSS. Gly81 serves as a coordination point for anthranilate. Residue Ser93 coordinates Mg(2+). Position 112 (Asn112) interacts with anthranilate. Arg167 provides a ligand contact to anthranilate. The Mg(2+) site is built by Asp226 and Glu227.

The protein belongs to the anthranilate phosphoribosyltransferase family. Homodimer. It depends on Mg(2+) as a cofactor.

It carries out the reaction N-(5-phospho-beta-D-ribosyl)anthranilate + diphosphate = 5-phospho-alpha-D-ribose 1-diphosphate + anthranilate. It participates in amino-acid biosynthesis; L-tryptophan biosynthesis; L-tryptophan from chorismate: step 2/5. Functionally, catalyzes the transfer of the phosphoribosyl group of 5-phosphorylribose-1-pyrophosphate (PRPP) to anthranilate to yield N-(5'-phosphoribosyl)-anthranilate (PRA). This is Anthranilate phosphoribosyltransferase from Ruegeria sp. (strain TM1040) (Silicibacter sp.).